The following is a 161-amino-acid chain: Crossover junction endodeoxyribonuclease RuvC (161 aa).

Residues Asp7, Glu67, and Asp139 contribute to the active site. The Mg(2+) site is built by Asp7, Glu67, and Asp139.

Belongs to the RuvC family. Homodimer which binds Holliday junction (HJ) DNA. The HJ becomes 2-fold symmetrical on binding to RuvC with unstacked arms; it has a different conformation from HJ DNA in complex with RuvA. In the full resolvosome a probable DNA-RuvA(4)-RuvB(12)-RuvC(2) complex forms which resolves the HJ. It depends on Mg(2+) as a cofactor.

The protein localises to the cytoplasm. It catalyses the reaction Endonucleolytic cleavage at a junction such as a reciprocal single-stranded crossover between two homologous DNA duplexes (Holliday junction).. Its function is as follows. The RuvA-RuvB-RuvC complex processes Holliday junction (HJ) DNA during genetic recombination and DNA repair. Endonuclease that resolves HJ intermediates. Cleaves cruciform DNA by making single-stranded nicks across the HJ at symmetrical positions within the homologous arms, yielding a 5'-phosphate and a 3'-hydroxyl group; requires a central core of homology in the junction. The consensus cleavage sequence is 5'-(A/T)TT(C/G)-3'. Cleavage occurs on the 3'-side of the TT dinucleotide at the point of strand exchange. HJ branch migration catalyzed by RuvA-RuvB allows RuvC to scan DNA until it finds its consensus sequence, where it cleaves and resolves the cruciform DNA. In Syntrophotalea carbinolica (strain DSM 2380 / NBRC 103641 / GraBd1) (Pelobacter carbinolicus), this protein is Crossover junction endodeoxyribonuclease RuvC.